Here is a 555-residue protein sequence, read N- to C-terminus: Glutamine--tRNA ligase (555 aa).

A 'HIGH' region motif is present at residues 35–45 (PEPNGYLHIGH). Residues 36–38 (EPN) and 42–48 (HIGHAKS) contribute to the ATP site. Asp68 and Tyr213 together coordinate L-glutamine. Residues Thr232 and 262 to 263 (RL) contribute to the ATP site. The 'KMSKS' region signature appears at 269–273 (ITSKR).

It belongs to the class-I aminoacyl-tRNA synthetase family. Monomer.

The protein localises to the cytoplasm. It carries out the reaction tRNA(Gln) + L-glutamine + ATP = L-glutaminyl-tRNA(Gln) + AMP + diphosphate. The chain is Glutamine--tRNA ligase from Ectopseudomonas mendocina (strain ymp) (Pseudomonas mendocina).